Consider the following 82-residue polypeptide: DNA gyrase inhibitor YacG (82 aa).

Residues C9, C12, C27, and C31 each coordinate Zn(2+). The disordered stretch occupies residues 44–82; sequence IGLPHEGDPGDAPVEYLDDRDLTQPSPERQNESFHRYSE. The span at 72–82 shows a compositional bias: basic and acidic residues; the sequence is RQNESFHRYSE.

It belongs to the DNA gyrase inhibitor YacG family. Interacts with GyrB. Zn(2+) serves as cofactor.

Functionally, inhibits all the catalytic activities of DNA gyrase by preventing its interaction with DNA. Acts by binding directly to the C-terminal domain of GyrB, which probably disrupts DNA binding by the gyrase. The polypeptide is DNA gyrase inhibitor YacG (Rhodopirellula baltica (strain DSM 10527 / NCIMB 13988 / SH1)).